The primary structure comprises 416 residues: Glutamyl-tRNA reductase (416 aa).

Residues Thr49–Arg52, Ser105, Glu110–Gln112, and Gln116 each bind substrate. Catalysis depends on Cys50, which acts as the Nucleophile. Residue Gly185 to Ile190 participates in NADP(+) binding.

Belongs to the glutamyl-tRNA reductase family. Homodimer.

The enzyme catalyses (S)-4-amino-5-oxopentanoate + tRNA(Glu) + NADP(+) = L-glutamyl-tRNA(Glu) + NADPH + H(+). The protein operates within porphyrin-containing compound metabolism; protoporphyrin-IX biosynthesis; 5-aminolevulinate from L-glutamyl-tRNA(Glu): step 1/2. In terms of biological role, catalyzes the NADPH-dependent reduction of glutamyl-tRNA(Glu) to glutamate 1-semialdehyde (GSA). In Shewanella baltica (strain OS185), this protein is Glutamyl-tRNA reductase.